A 286-amino-acid chain; its full sequence is ATP synthase gamma chain (286 aa).

Belongs to the ATPase gamma chain family. F-type ATPases have 2 components, CF(1) - the catalytic core - and CF(0) - the membrane proton channel. CF(1) has five subunits: alpha(3), beta(3), gamma(1), delta(1), epsilon(1). CF(0) has three main subunits: a, b and c.

Its subcellular location is the cell membrane. Functionally, produces ATP from ADP in the presence of a proton gradient across the membrane. The gamma chain is believed to be important in regulating ATPase activity and the flow of protons through the CF(0) complex. The polypeptide is ATP synthase gamma chain (Mycoplasma mobile (strain ATCC 43663 / 163K / NCTC 11711) (Mesomycoplasma mobile)).